Reading from the N-terminus, the 191-residue chain is MKHHSLIFLTGFSGSGKSTIGPLLANSLGFEFIDLDREIELTAGKSINRIFAEDGEAAFRSLELRTLEKIGQQERMVVSLGGGVLENDRCFELIRSHGTLIYLKSSPEILTLRLQHKTDRPLLKGPDGRKLTREEIQQRIAELLKKREPRYLKADLVLFTDSKKIGASVEELTRKIERHIRRASKNNTNEK.

14 to 19 (GSGKST) serves as a coordination point for ATP. Position 18 (Ser-18) interacts with Mg(2+). The substrate site is built by Asp-36, Arg-60, and Gly-82. Arg-120 contacts ATP. Arg-147 contributes to the substrate binding site.

The protein belongs to the shikimate kinase family. As to quaternary structure, monomer. Mg(2+) is required as a cofactor.

Its subcellular location is the cytoplasm. The enzyme catalyses shikimate + ATP = 3-phosphoshikimate + ADP + H(+). It functions in the pathway metabolic intermediate biosynthesis; chorismate biosynthesis; chorismate from D-erythrose 4-phosphate and phosphoenolpyruvate: step 5/7. Catalyzes the specific phosphorylation of the 3-hydroxyl group of shikimic acid using ATP as a cosubstrate. The protein is Shikimate kinase of Chlorobaculum tepidum (strain ATCC 49652 / DSM 12025 / NBRC 103806 / TLS) (Chlorobium tepidum).